We begin with the raw amino-acid sequence, 476 residues long: Serine/threonine-protein kinase sax-1 (476 aa).

Residues 87–381 form the Protein kinase domain; that stretch reads FESLKVIGRG…LDEIKQCPFV (295 aa). Residues 93–101 and K116 each bind ATP; that span reads IGRGAFGEV. The active-site Proton acceptor is D210. The 71-residue stretch at 382–452 folds into the AGC-kinase C-terminal domain; it reads KRIDWNHIRE…KRFDGLTQKM (71 aa).

It belongs to the protein kinase superfamily. AGC Ser/Thr protein kinase family. Mg(2+) serves as cofactor. Widely expressed in embryonic and larval neurons that contribute axons to the nerve ring and in hypodermal cells, including lateral seam cells. Also displays a punctate localization in muscle.

It localises to the cytoplasm. The protein resides in the nucleus. The enzyme catalyses L-seryl-[protein] + ATP = O-phospho-L-seryl-[protein] + ADP + H(+). It carries out the reaction L-threonyl-[protein] + ATP = O-phospho-L-threonyl-[protein] + ADP + H(+). Its function is as follows. Acts with sax-2 to restrict the growth of both primary and secondary neurites. Regulates mechanosensory tiling by controlling the termination point of sensory dendrites. The protein is Serine/threonine-protein kinase sax-1 of Caenorhabditis elegans.